Here is a 352-residue protein sequence, read N- to C-terminus: Strictosidine synthase (352 aa).

Positions 1–31 (MANFSESKSMMAVFFMFFLLLLSSSSSSSSS) are cleaved as a signal peptide. N-linked (GlcNAc...) asparagine glycosylation is found at Asn-95 and Asn-187.

This sequence belongs to the strictosidine synthase family. Monomer.

The protein localises to the vacuole. It catalyses the reaction 3alpha(S)-strictosidine + H2O = secologanin + tryptamine. It participates in alkaloid biosynthesis; 3alpha(S)-strictosidine biosynthesis; 3alpha(S)-strictosidine from secologanin and tryptamine: step 1/1. Its function is as follows. Catalyzes the stereospecific condensation of tryptamine with secologanin to form strictosidine, the key intermediate of indole alkaloid biosynthesis. This Catharanthus roseus (Madagascar periwinkle) protein is Strictosidine synthase (STR1).